A 116-amino-acid chain; its full sequence is Putative UPF0320 protein YLL065W (116 aa).

This sequence belongs to the UPF0320 family.

The chain is Putative UPF0320 protein YLL065W from Saccharomyces cerevisiae (strain ATCC 204508 / S288c) (Baker's yeast).